The sequence spans 202 residues: N-acetyltransferase 9-like protein (202 aa).

The region spanning 34–184 (EEIRRLTGSE…FTFELPKNRL (151 aa)) is the N-acetyltransferase domain.

This sequence belongs to the acetyltransferase family. GNAT subfamily.

The sequence is that of N-acetyltransferase 9-like protein from Caenorhabditis elegans.